The primary structure comprises 518 residues: ATPase expression protein 2, mitochondrial (518 aa).

Residues 1–15 (MLKKSRVLGKIPIPY) constitute a mitochondrion transit peptide.

Belongs to the AEP2 family. As to quaternary structure, binds to the 5'UTR of the OLI1 mRNA.

It is found in the mitochondrion. Required for translation of the mitochondrial OLI1 transcript coding for the mitochondrial ATP synthase subunit 9. This Kluyveromyces lactis (strain ATCC 8585 / CBS 2359 / DSM 70799 / NBRC 1267 / NRRL Y-1140 / WM37) (Yeast) protein is ATPase expression protein 2, mitochondrial (AEP2).